Here is a 115-residue protein sequence, read N- to C-terminus: Cyclin-dependent kinase 2-associated protein 1 (115 aa).

An interaction with CDK2AP2 region spans residues 20-25 (GSVHSP). The residue at position 46 (S46) is a Phosphoserine; by IKKE.

It belongs to the CDK2AP family. In terms of assembly, homodimer. Component of the nucleosome remodeling and deacetylase (NuRD) repressor complex, composed of core proteins MTA1, MTA2, MTA3, RBBP4, RBBP7, HDAC1, HDAC2, MBD2, MBD3, and peripherally associated proteins CDK2AP1, CDK2AP2, GATAD2A, GATAD2B, CHD3, CHD4 and CHD5. The exact stoichiometry of the NuRD complex is unknown, and some subunits such as MBD2 and MBD3, GATAD2A and GATAD2B, and CHD3, CHD4 and CHD5 define mutually exclusive NuRD complexes. Interacts with monomeric unphosphorylated CDK2. Interacts with CDK2AP2. Interacts with GATAD2A. Interacts with HDAC1. Interacts with HDAC2. Interacts with MBD2. Interacts with MBD3. Interacts with RBBP4. Interacts with RBBP7. Phosphorylated in vitro by IKBKE at Ser-46.

The protein resides in the nucleus. Its subcellular location is the chromosome. In terms of biological role, inhibitor of cyclin-dependent kinase CDK2. Also acts as a component of the histone deacetylase NuRD complex which participates in the remodeling of chromatin. The sequence is that of Cyclin-dependent kinase 2-associated protein 1 (CDK2AP1) from Homo sapiens (Human).